The sequence spans 152 residues: MQLTELIETTVVGLGYELVDLERTGRGMLCIYIDQPAGIAIEDCEKVTRQLQHVLTVENIDYERLEVSSPGLDRPLKKLADFERFAGSEAVITLKKPLDGRKSYRGILHAPEGETIGLEFEGKEGAAMLDFTLADIDKARLVPKVDFRSRKQ.

Belongs to the RimP family.

It is found in the cytoplasm. Functionally, required for maturation of 30S ribosomal subunits. The sequence is that of Ribosome maturation factor RimP from Paraburkholderia phymatum (strain DSM 17167 / CIP 108236 / LMG 21445 / STM815) (Burkholderia phymatum).